The primary structure comprises 675 residues: Parasporal crystal protein Cry18Ba (675 aa).

The protein belongs to the delta endotoxin family.

Binds to the brush border membrane vesicles of scarab larvae and damages the gut wall somehow to allow the vegetative cells of P.popilliae to enter the hemolymph. This is Parasporal crystal protein Cry18Ba (cry18Ba) from Paenibacillus popilliae (Bacillus popilliae).